Reading from the N-terminus, the 311-residue chain is tRNA-cytidine(32) 2-sulfurtransferase (311 aa).

Positions 47–52 match the PP-loop motif motif; that stretch reads SGGKDS. The [4Fe-4S] cluster site is built by cysteine 122, cysteine 125, and cysteine 213.

Belongs to the TtcA family. As to quaternary structure, homodimer. Mg(2+) serves as cofactor. The cofactor is [4Fe-4S] cluster.

It localises to the cytoplasm. The catalysed reaction is cytidine(32) in tRNA + S-sulfanyl-L-cysteinyl-[cysteine desulfurase] + AH2 + ATP = 2-thiocytidine(32) in tRNA + L-cysteinyl-[cysteine desulfurase] + A + AMP + diphosphate + H(+). Its pathway is tRNA modification. In terms of biological role, catalyzes the ATP-dependent 2-thiolation of cytidine in position 32 of tRNA, to form 2-thiocytidine (s(2)C32). The sulfur atoms are provided by the cysteine/cysteine desulfurase (IscS) system. This chain is tRNA-cytidine(32) 2-sulfurtransferase, found in Escherichia coli O7:K1 (strain IAI39 / ExPEC).